Consider the following 400-residue polypeptide: Glycerol-3-phosphate dehydrogenase [NAD(+)] 1 (400 aa).

NAD(+) contacts are provided by residues 50–55 (GSGNWG), Phe-138, Lys-161, and Ala-194. Lys-161 is a substrate binding site. The active-site Proton acceptor is the Lys-254. Arg-319 and Gln-348 together coordinate NAD(+). 319 to 320 (RN) lines the substrate pocket.

The protein belongs to the NAD-dependent glycerol-3-phosphate dehydrogenase family.

It carries out the reaction sn-glycerol 3-phosphate + NAD(+) = dihydroxyacetone phosphate + NADH + H(+). In Candida glabrata (strain ATCC 2001 / BCRC 20586 / JCM 3761 / NBRC 0622 / NRRL Y-65 / CBS 138) (Yeast), this protein is Glycerol-3-phosphate dehydrogenase [NAD(+)] 1 (GPD1).